The chain runs to 171 residues: MIIYKDIITGDEMFSDIYKIKESENGMMIEVEGKMISRAEGEIDDALIGGNASAEVQDEGCESTTVSGVDIVLNHKLQETSYDKKSYTAYIKDYMKAVKAKLQEVAPDRVDPFMANAPAEVKKILGNIKNFQFFTGESMNPDGMIGLLDFREDGVTPYMLFFKDGLEIEKC.

The 171-residue stretch at 1 to 171 (MIIYKDIITG…FKDGLEIEKC (171 aa)) folds into the TCTP domain.

The protein belongs to the TCTP family.

Its subcellular location is the cytoplasm. Its function is as follows. Involved in calcium binding and microtubule stabilization. This Labeo rohita (Indian major carp) protein is Translationally-controlled tumor protein homolog (tpt1).